The sequence spans 255 residues: Ribonuclease PH (255 aa).

Residues Arg86 and Gly124–Arg126 each bind phosphate.

This sequence belongs to the RNase PH family. As to quaternary structure, homohexameric ring arranged as a trimer of dimers.

The enzyme catalyses tRNA(n+1) + phosphate = tRNA(n) + a ribonucleoside 5'-diphosphate. Functionally, phosphorolytic 3'-5' exoribonuclease that plays an important role in tRNA 3'-end maturation. Removes nucleotide residues following the 3'-CCA terminus of tRNAs; can also add nucleotides to the ends of RNA molecules by using nucleoside diphosphates as substrates, but this may not be physiologically important. Probably plays a role in initiation of 16S rRNA degradation (leading to ribosome degradation) during starvation. In Hydrogenobaculum sp. (strain Y04AAS1), this protein is Ribonuclease PH.